The following is a 213-amino-acid chain: Imidazole glycerol phosphate synthase subunit HisH (213 aa).

The region spanning 4–211 (NLGLIDYGMG…LTWLRNGAEP (208 aa)) is the Glutamine amidotransferase type-1 domain. The active-site Nucleophile is Cys-82. Residues His-186 and Glu-188 contribute to the active site.

As to quaternary structure, heterodimer of HisH and HisF.

It localises to the cytoplasm. The catalysed reaction is 5-[(5-phospho-1-deoxy-D-ribulos-1-ylimino)methylamino]-1-(5-phospho-beta-D-ribosyl)imidazole-4-carboxamide + L-glutamine = D-erythro-1-(imidazol-4-yl)glycerol 3-phosphate + 5-amino-1-(5-phospho-beta-D-ribosyl)imidazole-4-carboxamide + L-glutamate + H(+). It catalyses the reaction L-glutamine + H2O = L-glutamate + NH4(+). It functions in the pathway amino-acid biosynthesis; L-histidine biosynthesis; L-histidine from 5-phospho-alpha-D-ribose 1-diphosphate: step 5/9. Its function is as follows. IGPS catalyzes the conversion of PRFAR and glutamine to IGP, AICAR and glutamate. The HisH subunit catalyzes the hydrolysis of glutamine to glutamate and ammonia as part of the synthesis of IGP and AICAR. The resulting ammonia molecule is channeled to the active site of HisF. The chain is Imidazole glycerol phosphate synthase subunit HisH from Synechococcus sp. (strain CC9605).